The sequence spans 197 residues: Phosphoheptose isomerase (197 aa).

In terms of domain architecture, SIS spans 36–197; sequence MVNALLNEGK…IDSQLFGSEE (162 aa). Position 51–53 (51–53) interacts with substrate; the sequence is NGG. Zn(2+) contacts are provided by H60 and E64. Substrate-binding positions include E64, 93–94, 119–121, S124, and Q174; these read ND and STS. Q174 and H182 together coordinate Zn(2+).

The protein belongs to the SIS family. GmhA subfamily. As to quaternary structure, homotetramer. Zn(2+) is required as a cofactor.

It is found in the cytoplasm. It catalyses the reaction 2 D-sedoheptulose 7-phosphate = D-glycero-alpha-D-manno-heptose 7-phosphate + D-glycero-beta-D-manno-heptose 7-phosphate. It participates in carbohydrate biosynthesis; D-glycero-D-manno-heptose 7-phosphate biosynthesis; D-glycero-alpha-D-manno-heptose 7-phosphate and D-glycero-beta-D-manno-heptose 7-phosphate from sedoheptulose 7-phosphate: step 1/1. Its function is as follows. Catalyzes the isomerization of sedoheptulose 7-phosphate in D-glycero-D-manno-heptose 7-phosphate. This is Phosphoheptose isomerase from Pseudomonas putida (strain GB-1).